Reading from the N-terminus, the 132-residue chain is Small ribosomal subunit protein uS8 (132 aa).

Belongs to the universal ribosomal protein uS8 family. In terms of assembly, part of the 30S ribosomal subunit. Contacts proteins S5 and S12.

One of the primary rRNA binding proteins, it binds directly to 16S rRNA central domain where it helps coordinate assembly of the platform of the 30S subunit. The protein is Small ribosomal subunit protein uS8 of Rickettsia akari (strain Hartford).